The sequence spans 368 residues: Probable magnesium transporter NIPA3 (368 aa).

At 1 to 18 (MASLSGSWRDAYKGMSSD) the chain is on the extracellular side. The helical transmembrane segment at 19 to 39 (NIKGLVLALSSSLFIGASFIV) threads the bilayer. The Cytoplasmic portion of the chain corresponds to 40–66 (KKKGLKRAGASGLRAGSGGYSYLLEPL). Residues 67 to 87 (WWVGMITMIVGEIANFAAYAF) traverse the membrane as a helical segment. At 88–90 (APA) the chain is on the extracellular side. The chain crosses the membrane as a helical span at residues 91-111 (ILVTPLGALSIIISAALAHVI). Residues 112–115 (LHEK) lie on the Cytoplasmic side of the membrane. The chain crosses the membrane as a helical span at residues 116 to 136 (LHTFGLLGCVLCVVGSITIVL). The Extracellular portion of the chain corresponds to 137–157 (HAPQEQEIDSVLQVWNLATEP). Residues 158–178 (AFLLYAAAVVGAAIILIVQFV) traverse the membrane as a helical segment. Topologically, residues 179-189 (PQYGQSHVMVY) are cytoplasmic. A helical transmembrane segment spans residues 190-210 (IGVCSLVGSLSVMSVKALGIA). Topologically, residues 211–220 (LKLTFSGMNQ) are extracellular. Residues 221 to 241 (LIYPQTWVFTLIVLTCVITQM) traverse the membrane as a helical segment. Residues 242-255 (NYLNKALDTFNTAV) are Cytoplasmic-facing. The helical transmembrane segment at 256–276 (VSPIYYVMFTSLTILASVIMF) threads the bilayer. At 277–283 (KDWDRQD) the chain is on the extracellular side. Residues 284 to 304 (GTQIVTELCGFVTILSGTFLL) traverse the membrane as a helical segment. Residues 305–368 (HKTKDMVDGS…ILPQDGPEAV (64 aa)) are Cytoplasmic-facing.

It belongs to the NIPA (TC 2.A.7) family. Homodimer.

Its subcellular location is the cell membrane. It is found in the early endosome. Its function is as follows. Acts as a Mg(2+) transporter. Can also transport other divalent cations such as Fe(2+), Sr(2+), Ba(2+), Mn(2+) and Co(2+) but to a much less extent than Mg(2+). This chain is Probable magnesium transporter NIPA3, found in Arabidopsis thaliana (Mouse-ear cress).